The following is a 516-amino-acid chain: MRWITRPGWPGNLLALAAGALMPLAQAPFDLWPLALLSLALLYLGLREAPPRAALWRGWCYGFGLYAVGTSWIYISIHDYGAASLPLAGLLTLALMLALAFFFALPAWLWSRWLRRSDAPLADALAFAALWLALEGFRGWFLTGFPWLYAGYSQLEGPLAGLAPLGGVWLLSFALALSAALLVNLPRLLRRPPALLGALVLLLAPWATGLALRGHAWTAPAGAPLKVAAVQGNVEQNLKWDPEQLSAQLLLYRDLTLQRAAPVDLVVWPETAVPILKEYAENYLAGLDRYARPRHMALLTGVPIRRHNAQGEPRYYNGIVVAGEGSGTYLKQKLVPFGEYVPLQEVLRGLIAFFDLPMSDFARGPADQPLLEARGWRIAPYICYEVVYPEFAAGLAARSDLLLTISNDAWFGSSIGPLQHLQMAQMRALEAGRWMIRTTNNGVTALIDPFGRITERLPQFQRAVLYGEVTPMQGLTPYLRWRAWPLAGLAVLLLGWALLRRRAERAAPGPAVEAQR.

The next 6 membrane-spanning stretches (helical) occupy residues 24–44 (LAQAPFDLWPLALLSLALLYL), 58–78 (GWCYGFGLYAVGTSWIYISIH), 90–110 (LLTLALMLALAFFFALPAWLW), 125–145 (LAFAALWLALEGFRGWFLTGF), 163–183 (APLGGVWLLSFALALSAALLV), and 192–212 (PPALLGALVLLLAPWATGLAL). The CN hydrolase domain occupies 230 to 471 (VQGNVEQNLK…RAVLYGEVTP (242 aa)). The active-site Proton acceptor is Glu270. Lys331 is a catalytic residue. Cys383 (nucleophile) is an active-site residue. Residues 479 to 499 (LRWRAWPLAGLAVLLLGWALL) traverse the membrane as a helical segment.

This sequence belongs to the CN hydrolase family. Apolipoprotein N-acyltransferase subfamily.

It is found in the cell inner membrane. The enzyme catalyses N-terminal S-1,2-diacyl-sn-glyceryl-L-cysteinyl-[lipoprotein] + a glycerophospholipid = N-acyl-S-1,2-diacyl-sn-glyceryl-L-cysteinyl-[lipoprotein] + a 2-acyl-sn-glycero-3-phospholipid + H(+). The protein operates within protein modification; lipoprotein biosynthesis (N-acyl transfer). Its function is as follows. Catalyzes the phospholipid dependent N-acylation of the N-terminal cysteine of apolipoprotein, the last step in lipoprotein maturation. The polypeptide is Apolipoprotein N-acyltransferase (Azotobacter vinelandii (strain DJ / ATCC BAA-1303)).